The chain runs to 150 residues: Large ribosomal subunit protein bL9 (150 aa).

It belongs to the bacterial ribosomal protein bL9 family.

Binds to the 23S rRNA. This Corynebacterium diphtheriae (strain ATCC 700971 / NCTC 13129 / Biotype gravis) protein is Large ribosomal subunit protein bL9.